A 254-amino-acid polypeptide reads, in one-letter code: Hydroxyethylthiazole kinase (254 aa).

Substrate is bound at residue Met-40. 2 residues coordinate ATP: Arg-116 and Ser-162. Gly-189 is a binding site for substrate.

The protein belongs to the Thz kinase family. It depends on Mg(2+) as a cofactor.

It catalyses the reaction 5-(2-hydroxyethyl)-4-methylthiazole + ATP = 4-methyl-5-(2-phosphooxyethyl)-thiazole + ADP + H(+). It participates in cofactor biosynthesis; thiamine diphosphate biosynthesis; 4-methyl-5-(2-phosphoethyl)-thiazole from 5-(2-hydroxyethyl)-4-methylthiazole: step 1/1. Its function is as follows. Catalyzes the phosphorylation of the hydroxyl group of 4-methyl-5-beta-hydroxyethylthiazole (THZ). In Limosilactobacillus fermentum (strain NBRC 3956 / LMG 18251) (Lactobacillus fermentum), this protein is Hydroxyethylthiazole kinase.